A 1145-amino-acid polypeptide reads, in one-letter code: Structure-specific endonuclease subunit SLX4 (1145 aa).

The segment at 48 to 108 is disordered; sequence ADIPVQPDPP…GKSKQQPSIS (61 aa). Positions 321 to 372 form a coiled coil; sequence ERETQKCRQLRQQHELVYAELERYYGDPQKLEEEVMQELDELEKLVADNMIE. Positions 382 to 393 are enriched in low complexity; it reads EAESSSTGSSPS. 3 disordered regions span residues 382–442, 613–634, and 666–689; these read EAES…EDEP, QSSH…SSFS, and SAEK…DLTQ. Basic and acidic residues predominate over residues 395 to 410; it reads EPPDKRPKMTMEDKEN. Composition is skewed to polar residues over residues 411–430, 613–633, and 678–689; these read LQPT…TRCT, QSSH…SSSF, and YKQSDASVDLTQ.

Belongs to the SLX4 family. As to quaternary structure, forms a heterodimer with SLX1. Interacts with mei-9; catalytic subunit of the MEI-9-ERCC1 endonuclease.

The protein localises to the nucleus. In terms of biological role, regulatory subunit that interacts with and increases the activity of different structure-specific endonucleases. Has several distinct roles in protecting genome stability by resolving diverse forms of deleterious DNA structures originating from replication and recombination intermediates and from DNA damage. Component of the SLX1-SLX4 structure-specific endonuclease that resolves DNA secondary structures generated during DNA repair and recombination. Has endonuclease activity towards branched DNA substrates, introducing single-strand cuts in duplex DNA close to junctions with ss-DNA. Interacts with the structure-specific MEI-9-ERCC1 endonuclease to generate meiotic crossovers. The sequence is that of Structure-specific endonuclease subunit SLX4 (mus312) from Drosophila melanogaster (Fruit fly).